A 373-amino-acid polypeptide reads, in one-letter code: 3-isopropylmalate dehydrogenase (373 aa).

NAD(+) is bound at residue 82–93 (GPKWGTGTVRPE). Residues Arg-100, Arg-110, Arg-139, and Asp-231 each coordinate substrate. Mg(2+) is bound by residues Asp-231, Asp-256, and Asp-260. 295-306 (GSAPDLPANKVN) is a binding site for NAD(+).

This sequence belongs to the isocitrate and isopropylmalate dehydrogenases family. As to quaternary structure, homodimer. The cofactor is Mg(2+). Requires Mn(2+) as cofactor.

Its subcellular location is the cytoplasm. It carries out the reaction (2R,3S)-3-isopropylmalate + NAD(+) = 4-methyl-2-oxopentanoate + CO2 + NADH. The protein operates within amino-acid biosynthesis; L-leucine biosynthesis; L-leucine from 3-methyl-2-oxobutanoate: step 3/4. In terms of biological role, catalyzes the oxidation of 3-carboxy-2-hydroxy-4-methylpentanoate (3-isopropylmalate) to 3-carboxy-4-methyl-2-oxopentanoate. The product decarboxylates to 4-methyl-2 oxopentanoate. The sequence is that of 3-isopropylmalate dehydrogenase (LEU2) from Candida albicans (Yeast).